The following is a 549-amino-acid chain: Glutamyl-tRNA(Gln) amidotransferase subunit B, chloroplastic/mitochondrial (549 aa).

It belongs to the GatB/GatE family. GatB subfamily. In terms of assembly, subunit of the heterotrimeric GatCAB amidotransferase (AdT) complex, composed of A, B and C subunits.

The protein localises to the mitochondrion. The protein resides in the plastid. It is found in the chloroplast. It catalyses the reaction L-glutamyl-tRNA(Gln) + L-glutamine + ATP + H2O = L-glutaminyl-tRNA(Gln) + L-glutamate + ADP + phosphate + H(+). Functionally, allows the formation of correctly charged Gln-tRNA(Gln) through the transamidation of misacylated Glu-tRNA(Gln) in chloroplasts and mitochondria. The reaction takes place in the presence of glutamine and ATP through an activated gamma-phospho-Glu-tRNA(Gln). The protein is Glutamyl-tRNA(Gln) amidotransferase subunit B, chloroplastic/mitochondrial of Ricinus communis (Castor bean).